Reading from the N-terminus, the 475-residue chain is Mitochondrial adenyl nucleotide antiporter SLC25A24 (475 aa).

Positions 1–173 are regulatory N-terminal domain; it reads MLRWLRGFVL…RFWKHSTGID (173 aa). Residues 1-197 lie on the Mitochondrial intermembrane side of the membrane; that stretch reads MLRWLRGFVL…ERKSGQWWRQ (197 aa). EF-hand domains follow at residues 19 to 54, 55 to 88, 86 to 121, and 122 to 157; these read EPPT…LGIP, LGQD…KDHE, DHEK…LGLT, and ISEQ…NPVA. 20 residues coordinate Ca(2+): aspartate 32, asparagine 34, aspartate 36, valine 38, glutamate 43, aspartate 68, asparagine 70, aspartate 72, lysine 74, glutamate 79, aspartate 99, asparagine 101, aspartate 103, lysine 105, glutamate 110, aspartate 135, aspartate 137, threonine 139, threonine 141, and glutamate 146. A linker region region spans residues 159 to 168; that stretch reads IEEIIRFWKH. The tract at residues 174-475 is C-terminal transmembrane transporter domain; that stretch reads IGDSLTIPDE…MKQTLGVTQK (302 aa). Solcar repeat units lie at residues 192 to 276, 284 to 369, and 381 to 469; these read GQWW…YKKL, IGTF…LKSH, and PGVL…MKQT. Residues 198-215 traverse the membrane as a helical segment; the sequence is LLAGGIAGAVSRTSTAPL. The Mitochondrial matrix segment spans residues 216-250; sequence DRLKVMMQVHGSKSMNIFGGFRQMIKEGGVRSLWR. The chain crosses the membrane as a helical span at residues 251 to 270; it reads GNGTNVIKIAPETAVKFWVY. The Mitochondrial intermembrane segment spans residues 271–293; that stretch reads EQYKKLLTEEGQKIGTFERFISG. A helical transmembrane segment spans residues 294-307; sequence SMAGATAQTFIYPM. The Mitochondrial matrix portion of the chain corresponds to 308–343; that stretch reads EVMKTRLAVGKTGQYSGIYDCAKKILKYEGFGAFYK. Lysine 318 bears the N6-acetyllysine; alternate mark. Lysine 318 bears the N6-succinyllysine; alternate mark. Position 334 is an N6-acetyllysine (lysine 334). Residues 344–363 traverse the membrane as a helical segment; sequence GYVPNLLGIIPYAGIDLAVY. Over 364 to 386 the chain is Mitochondrial intermembrane; it reads ELLKSHWLDNFAKDSVNPGVLVL. Residues 387–404 form a helical membrane-spanning segment; sequence LGCGALSSTCGQLASYPL. Residues 405–443 are Mitochondrial matrix-facing; sequence ALVRTRMQAQAMLEGAPQLNMVGLFRRIISKEGLPGLYR. Lysine 435 carries the N6-acetyllysine; alternate modification. An N6-succinyllysine; alternate modification is found at lysine 435. A helical transmembrane segment spans residues 444–463; the sequence is GITPNFMKVLPAVGISYVVY. The Mitochondrial intermembrane portion of the chain corresponds to 464 to 475; sequence ENMKQTLGVTQK.

It belongs to the mitochondrial carrier (TC 2.A.29) family. Monomer. Mainly expressed in colon. Also expressed in the small intestine proximal to the ileum. Weakly expressed in kidney but not in the liver.

It localises to the mitochondrion inner membrane. It is found in the peroxisome membrane. The catalysed reaction is Mg(2+)(out) + phosphate(in) + ATP(out) = Mg(2+)(in) + phosphate(out) + ATP(in). It catalyses the reaction ADP(out) + phosphate(in) + H(+)(out) = ADP(in) + phosphate(out) + H(+)(in). The enzyme catalyses AMP(out) + phosphate(in) = AMP(in) + phosphate(out). It carries out the reaction phosphate(in) + ATP(out) + 2 H(+)(out) = phosphate(out) + ATP(in) + 2 H(+)(in). The catalysed reaction is dADP(in) + ADP(out) = dADP(out) + ADP(in). It catalyses the reaction Mg(2+)(in) + ADP(out) + ATP(in) + H(+)(out) = Mg(2+)(out) + ADP(in) + ATP(out) + H(+)(in). The enzyme catalyses ADP(out) + diphosphate(in) = ADP(in) + diphosphate(out). It carries out the reaction dAMP(in) + ADP(out) + H(+)(out) = dAMP(out) + ADP(in) + H(+)(in). The catalysed reaction is 3'-AMP(in) + ADP(out) + H(+)(out) = 3'-AMP(out) + ADP(in) + H(+)(in). It catalyses the reaction dAMP(out) + phosphate(in) = dAMP(in) + phosphate(out). The enzyme catalyses 3'-AMP(out) + phosphate(in) = 3'-AMP(in) + phosphate(out). It carries out the reaction dADP(out) + phosphate(in) + H(+)(out) = dADP(in) + phosphate(out) + H(+)(in). With respect to regulation, activated by an increase in cytosolic calcium levels that induce a conformational change of the N-terminal regulatory domain, uncapping the channel and allowing transport. Inhibited by bathophenanthroline, mersalyl, p-hydroxymercuribenzoate, bromcresol purple and tannic acid. Functionally, electroneutral antiporter that mediates the transport of adenyl nucleotides through the inner mitochondrial membrane. Originally identified as an ATP-magnesium/inorganic phosphate antiporter, it also acts as a broad specificity adenyl nucleotide antiporter. By regulating the mitochondrial matrix adenyl nucleotide pool could adapt to changing cellular energetic demands and indirectly regulate adenyl nucleotide-dependent metabolic pathways. In vitro, a low activity is also observed with guanyl and pyrimidine nucleotides. May play a role in protecting cells against oxidative stress-induced cell death, by buffering calcium levels in the mitochondrial matrix through the formation of calcium-phosphate precipitates. The protein is Mitochondrial adenyl nucleotide antiporter SLC25A24 (SLC25A24) of Oryctolagus cuniculus (Rabbit).